The following is a 344-amino-acid chain: Transmembrane protein 268 (344 aa).

A disordered region spans residues 1–31; that stretch reads MACEPQMDPGGAAGPLPTSSPGWSPLPGGSP. The span at 14–27 shows a compositional bias: low complexity; that stretch reads GPLPTSSPGWSPLP. The next 2 helical transmembrane spans lie at 106–126 and 133–153; these read AFAV…SQMF and AGVL…VVIF. The segment at 244–266 is disordered; it reads TANEGPENLLEETPLLPDRPGST. Residues 247 to 259 show a composition bias toward low complexity; the sequence is EGPENLLEETPLL.

Interacts with ITGAM; this interaction inhibits ITGAM degradation via the endosome-lysosome pathway. Interacts with ITGB4; this interaction prevents ITGB4 degradation.

The protein resides in the cell membrane. Its function is as follows. Stabilizes cell surface expression of ITGAM and participates in the adhesion and migration of phagocytes during bacterial clearance. The polypeptide is Transmembrane protein 268 (TMEM268) (Bos taurus (Bovine)).